Reading from the N-terminus, the 84-residue chain is Small ribosomal subunit protein eS27-like (84 aa).

Over residues 1-16 the composition is skewed to basic and acidic residues; it reads MPLARDLLHPSLEEEK. The disordered stretch occupies residues 1–23; that stretch reads MPLARDLLHPSLEEEKKKHKKKR. The segment at 38-60 adopts a C4-type zinc-finger fold; the sequence is PGCYKITTVFSHAQTVVLCVGCS.

Belongs to the eukaryotic ribosomal protein eS27 family. The cofactor is Zn(2+).

The polypeptide is Small ribosomal subunit protein eS27-like (Mus musculus (Mouse)).